The chain runs to 326 residues: Tetraketide alpha-pyrone reductase 1 (326 aa).

NADP(+)-binding positions include 8–32, lysine 44, and tyrosine 162; that span reads VCVTGASGFLASWLVKRLLLEGYEV.

Belongs to the NAD(P)-dependent epimerase/dehydratase family. Dihydroflavonol-4-reductase subfamily. Interacts with 4CLL1/ACOS5, PKSA and PKSB. Specifically expressed in anther tapetal cells during microspores development.

Its subcellular location is the cytoplasm. It localises to the nucleus. The protein localises to the endoplasmic reticulum. Functionally, involved in the biosynthesis of hydroxylated tetraketide compounds that serve as sporopollenin precursors (the main constituents of exine). Is essential for pollen wall development. Acts on tetraketide alpha-pyrones and reduces the carbonyl function on the tetraketide alkyl chain to a secondary alcohol function. The chain is Tetraketide alpha-pyrone reductase 1 (TKPR1) from Arabidopsis thaliana (Mouse-ear cress).